The following is a 25-amino-acid chain: Antimicrobial peptide 3 (25 aa).

In terms of tissue distribution, skin.

It is found in the secreted. Has antibacterial activity against Gram-positive bacterium S.aureus and Gram-negative bacterium E.coli, when in combination with XT1 and XT6. This chain is Antimicrobial peptide 3, found in Xenopus tropicalis (Western clawed frog).